Reading from the N-terminus, the 72-residue chain is UPF0495 protein KLLA0D04334g (72 aa).

The chain crosses the membrane as a helical span at residues proline 20–tyrosine 42.

It belongs to the UPF0495 family.

It is found in the membrane. This is UPF0495 protein KLLA0D04334g from Kluyveromyces lactis (strain ATCC 8585 / CBS 2359 / DSM 70799 / NBRC 1267 / NRRL Y-1140 / WM37) (Yeast).